We begin with the raw amino-acid sequence, 197 residues long: Holliday junction branch migration complex subunit RuvA (197 aa).

The tract at residues 1 to 63 is domain I; the sequence is MFEYLNGKLV…EDAHSLYGFV (63 aa). A domain II region spans residues 64–142; it reads NEAEKALFLR…ATGTVGISLL (79 aa). A flexible linker region spans residues 142 to 146; it reads LDAGP. The domain III stretch occupies residues 147 to 197; the sequence is AGNLALEEAIEALQALGYKATELKKIEKKLAQETGLTSEEYIKSALKLMMK.

This sequence belongs to the RuvA family. In terms of assembly, homotetramer. Forms an RuvA(8)-RuvB(12)-Holliday junction (HJ) complex. HJ DNA is sandwiched between 2 RuvA tetramers; dsDNA enters through RuvA and exits via RuvB. An RuvB hexamer assembles on each DNA strand where it exits the tetramer. Each RuvB hexamer is contacted by two RuvA subunits (via domain III) on 2 adjacent RuvB subunits; this complex drives branch migration. In the full resolvosome a probable DNA-RuvA(4)-RuvB(12)-RuvC(2) complex forms which resolves the HJ.

It is found in the cytoplasm. In terms of biological role, the RuvA-RuvB-RuvC complex processes Holliday junction (HJ) DNA during genetic recombination and DNA repair, while the RuvA-RuvB complex plays an important role in the rescue of blocked DNA replication forks via replication fork reversal (RFR). RuvA specifically binds to HJ cruciform DNA, conferring on it an open structure. The RuvB hexamer acts as an ATP-dependent pump, pulling dsDNA into and through the RuvAB complex. HJ branch migration allows RuvC to scan DNA until it finds its consensus sequence, where it cleaves and resolves the cruciform DNA. This Lactococcus lactis subsp. lactis (strain IL1403) (Streptococcus lactis) protein is Holliday junction branch migration complex subunit RuvA.